The sequence spans 316 residues: MTQLDSLRSMTVVVADTGDIEAIKQYQPQDATTNPSLILSASALPQYAPLIDDAIAYAKTKSDCPRQQLVDAEDKLAVNIGLEILKIIPGRISTEVDARLSYDTQATIEKARKLIKLYNEAGIENHRILIKIASTWQGIRAAEVLEKEGINCNLTLLFSEAQARACAEAGVYLISPFVGRILDWHKANTGRQDYPAAEDPGVISVTQIYNYYKQHNYKTVVMGASFRNVDEIIELAGCDRLTISPTLLSHLQAREGELVRKLAFSGELKDRPQPLTESEFYWQHNSDPMAVAKLAEGICKFAEDQEKLEKMLLERL.

K131 acts as the Schiff-base intermediate with substrate in catalysis.

Belongs to the transaldolase family. Type 1 subfamily. As to quaternary structure, homodimer.

It is found in the cytoplasm. It catalyses the reaction D-sedoheptulose 7-phosphate + D-glyceraldehyde 3-phosphate = D-erythrose 4-phosphate + beta-D-fructose 6-phosphate. It participates in carbohydrate degradation; pentose phosphate pathway; D-glyceraldehyde 3-phosphate and beta-D-fructose 6-phosphate from D-ribose 5-phosphate and D-xylulose 5-phosphate (non-oxidative stage): step 2/3. Transaldolase is important for the balance of metabolites in the pentose-phosphate pathway. This is Transaldolase B (talB) from Pasteurella multocida (strain Pm70).